A 993-amino-acid polypeptide reads, in one-letter code: Synaptonemal complex protein 1 (993 aa).

The short motif at 98 to 108 is the Mediates head to head self-assembly of N-terminal ends element; sequence PMSRLYSKLYK. The short motif at 114 to 117 is the Nuclear localization signal element; it reads KKWK. Coiled coils occupy residues 117-172 and 215-688; these read KVSI…LIKE and IEKM…EIEN. The interval 203-359 is interaction with SYCE3; that stretch reads ETRQVYVDLN…SQLTEVKEAQ (157 aa). Residues 694–788 are required for pH-induced assembly of C-terminal ends into antiparallel tetramers; that stretch reads GKLLGEVEKA…VSLKKQLEIE (95 aa). The Nuclear localization signal motif lies at 697-700; the sequence is LGEV. Positions 764–808 form a coiled coil; sequence KIALETELSNIRNELVSLKKQLEIEKEEKEKLKMAKENTAILKDK. Residues 801–993 form a DNA-binding region; sequence NTAILKDKKD…RLKEAEKLFS (193 aa). A Phosphoserine modification is found at Ser-820. Positions 824-861 are disordered; it reads TSWKFDSKTTPSQNISRLSSSMDSGKSKDNRDNLRASA. Polar residues predominate over residues 831 to 847; the sequence is KTTPSQNISRLSSSMDS. Residues 848–857 show a composition bias toward basic and acidic residues; it reads GKSKDNRDNL. A Nuclear localization signal motif is present at residues 898-901; that stretch reads KKRK.

As to quaternary structure, structural component of synaptonemal complexes. Homotetramer that consists of an N-terminal four-helical bundle that bifurcates into two elongated C-terminal dimeric coiled coils. This tetrameric building block potentially self-assembles into a supramolecular zipper-like lattice to mediate meiotic chromosome synapsis. Self-assembly is likely initiated by local proton density at chromosome axis, which is predicted to trigger antiparallel back to back assembly of adjacent C-terminal ends into tetrameric structures that anchor to chromosomal DNA. Then the N-terminal ends are predicted to undergo cooperative antiparallel head to head assembly at the midline of synaptonemal complexes central element to form a zipper-like lattice between properly aligned homologous chromosomes. The nascent synapsis generated by SYCP1 is stabilized through interaction with central element proteins SYCE1 and SYCE2. Interacts (via tetrameric core) with SYCE3; the interaction remodels SYCP1 homotetramers to 2:1 heterotrimers with SYCE3. SYCP1/SYCE3 heterotrimers form lattice assemblies as part of the mature synaptonemal complex via both lateral and head-to-head interactions. Forms a complex with EWSR1, PRDM9, SYCP3 and REC8; complex formation is dependent of phosphorylated form of REC8 and requires PRDM9 bound to hotspot DNA; EWSR1 joins PRDM9 with the chromosomal axis through REC8. Interacts with SPO16. Detected in testis. Detected in spermatocytes (at protein level).

The protein localises to the nucleus. It is found in the chromosome. The protein resides in the centromere. Its function is as follows. Major component of the transverse filaments of synaptonemal complexes, formed between homologous chromosomes during meiotic prophase. Required for normal assembly of the central element of the synaptonemal complexes. Required for normal centromere pairing during meiosis. Required for normal meiotic chromosome synapsis during oocyte and spermatocyte development and for normal male and female fertility. The chain is Synaptonemal complex protein 1 from Mus musculus (Mouse).